The chain runs to 1597 residues: Transmembrane protein 131-like (1597 aa).

An N-terminal signal peptide occupies residues 1–40; it reads MAGLRRPQSGAYRRTAAAVNLLLGVFQVLLSCCRPGGAQG. Over 41–869 the chain is Extracellular; it reads QAFEPLPNVV…VVPGPSWEES (829 aa). Residues N343, N593, N709, and N846 are each glycosylated (N-linked (GlcNAc...) asparagine). The tract at residues 696-916 is required for Wnt-signaling inhibition and LRP6 degradation; the sequence is DYGKVTSLIL…QNGSSSSQQN (221 aa). The chain crosses the membrane as a helical span at residues 870–890; sequence FWRLTVFFVSLSLLGVILIAF. Topologically, residues 891-1597 are cytoplasmic; the sequence is QQAQYILMEF…SRDSSYCGNM (707 aa). A compositionally biased stretch (low complexity) spans 907–917; it reads QNGSSSSQQNG. 3 disordered regions span residues 907 to 928, 1096 to 1240, and 1252 to 1322; these read QNGS…SHPH, AELK…EQRL, and DGAG…SDCD. Positions 1213–1222 are enriched in basic residues; the sequence is RPCRRNKKRA. Residues 1223-1239 show a composition bias toward low complexity; it reads SAQASSSPRPSEQSEQR. A compositionally biased stretch (basic and acidic residues) spans 1269 to 1290; that stretch reads PERREEDSYYQKSEKKCADKFC. Residues 1291–1319 show a composition bias toward low complexity; that stretch reads SDSSSDCGSSSGSVRASRGSWGSWSSSSS.

It belongs to the TMEM131 family.

It localises to the cell membrane. Its subcellular location is the endoplasmic reticulum. The protein localises to the cytoplasm. Its function is as follows. In its membrane-associated form, antagonizes canonical Wnt signaling by triggering lysosome-dependent degradation of Wnt-activated LRP6. Regulates thymocyte proliferation. The polypeptide is Transmembrane protein 131-like (Mus musculus (Mouse)).